The following is a 483-amino-acid chain: CdaA regulatory protein CdaR (483 aa).

The helical transmembrane segment at 9-26 (WAVKIIALLFALLLYVAV) threads the bilayer. 4 consecutive YbbR-like domains span residues 55-135 (IPVK…TVTI), 143-228 (FPVE…KITV), 237-316 (VPFK…TLHI), and 329-394 (VPIK…VNGP). The disordered stretch occupies residues 410-483 (LTSKKSNTST…STANSQSSSE (74 aa)). Low complexity predominate over residues 413–430 (KKSNTSTNDNSSNTSGNQ). Residues 431-454 (DTDKQTNDQKNNQQEDTKNTDKNN) are compositionally biased toward basic and acidic residues.

In terms of assembly, interacts with CdaA.

Its subcellular location is the cell membrane. Functionally, upon coexpression in E.coli stimulates the diadenylate cyclase activity of CdaA about 20-fold. In B.subtilis c-di-AMP is a second messenger that mediates growth, DNA repair and cell wall homeostasis; it is toxic when present in excess. The protein is CdaA regulatory protein CdaR of Bacillus subtilis (strain 168).